Here is a 123-residue protein sequence, read N- to C-terminus: Large ribosomal subunit protein bL19 (123 aa).

The protein belongs to the bacterial ribosomal protein bL19 family.

Its function is as follows. This protein is located at the 30S-50S ribosomal subunit interface and may play a role in the structure and function of the aminoacyl-tRNA binding site. In Bdellovibrio bacteriovorus (strain ATCC 15356 / DSM 50701 / NCIMB 9529 / HD100), this protein is Large ribosomal subunit protein bL19.